The chain runs to 246 residues: MYLLVDVGNTHSVFSITEDGKTFRRWRLSTGVFQTEDELFSHLHPLLGDAMREIKGIGVASVVPTQNTVIERFSQKYFHISPIWVKAKNGCVKWNVKNPSEVGADRVANVVAFVKEYGKNGIIIDMGTATTVDLVVNGSYEGGAILPGFFMMVHSLFRGTAKLPLVEVKPADFVVGKDTEENIRLGVVNGSVYALEGIIGRIKEVYGDLPVVLTGGQSKIVKDMIKHEIFDEDLTIKGVYHFCFGD.

ATP is bound at residue 6-13 (DVGNTHSV). 103-106 (GADR) contacts substrate. Aspartate 105 (proton acceptor) is an active-site residue. Residue aspartate 125 coordinates K(+). Threonine 128 lines the ATP pocket. Threonine 179 lines the substrate pocket.

This sequence belongs to the type III pantothenate kinase family. Homodimer. Requires NH4(+) as cofactor. K(+) serves as cofactor.

It localises to the cytoplasm. It catalyses the reaction (R)-pantothenate + ATP = (R)-4'-phosphopantothenate + ADP + H(+). Its pathway is cofactor biosynthesis; coenzyme A biosynthesis; CoA from (R)-pantothenate: step 1/5. Catalyzes the phosphorylation of pantothenate (Pan), the first step in CoA biosynthesis. This is Type III pantothenate kinase (coaX) from Thermotoga maritima (strain ATCC 43589 / DSM 3109 / JCM 10099 / NBRC 100826 / MSB8).